The chain runs to 384 residues: S-adenosylmethionine synthase (384 aa).

Histidine 15 is an ATP binding site. Aspartate 17 lines the Mg(2+) pocket. Residue glutamate 43 participates in K(+) binding. Residues glutamate 56 and glutamine 99 each contribute to the L-methionine site. The interval 99 to 109 is flexible loop; the sequence is QSPDINQGVDK. ATP contacts are provided by residues 164 to 166, 230 to 231, aspartate 239, 245 to 246, alanine 262, and lysine 266; these read DAK, RF, and RK. An L-methionine-binding site is contributed by aspartate 239. Lysine 270 serves as a coordination point for L-methionine.

It belongs to the AdoMet synthase family. In terms of assembly, homotetramer; dimer of dimers. The cofactor is Mg(2+). K(+) serves as cofactor.

It localises to the cytoplasm. The enzyme catalyses L-methionine + ATP + H2O = S-adenosyl-L-methionine + phosphate + diphosphate. It participates in amino-acid biosynthesis; S-adenosyl-L-methionine biosynthesis; S-adenosyl-L-methionine from L-methionine: step 1/1. Catalyzes the formation of S-adenosylmethionine (AdoMet) from methionine and ATP. The overall synthetic reaction is composed of two sequential steps, AdoMet formation and the subsequent tripolyphosphate hydrolysis which occurs prior to release of AdoMet from the enzyme. The sequence is that of S-adenosylmethionine synthase from Vibrio vulnificus (strain YJ016).